The chain runs to 275 residues: 4-hydroxy-tetrahydrodipicolinate reductase (275 aa).

NAD(+)-binding positions include 8 to 13 (GATGRM), 100 to 102 (GTT), and 126 to 129 (SPNM). The active-site Proton donor/acceptor is His-160. (S)-2,3,4,5-tetrahydrodipicolinate is bound at residue His-161. Residue Lys-164 is the Proton donor of the active site. 170 to 171 (GT) contributes to the (S)-2,3,4,5-tetrahydrodipicolinate binding site.

The protein belongs to the DapB family.

Its subcellular location is the cytoplasm. The enzyme catalyses (S)-2,3,4,5-tetrahydrodipicolinate + NAD(+) + H2O = (2S,4S)-4-hydroxy-2,3,4,5-tetrahydrodipicolinate + NADH + H(+). It catalyses the reaction (S)-2,3,4,5-tetrahydrodipicolinate + NADP(+) + H2O = (2S,4S)-4-hydroxy-2,3,4,5-tetrahydrodipicolinate + NADPH + H(+). The protein operates within amino-acid biosynthesis; L-lysine biosynthesis via DAP pathway; (S)-tetrahydrodipicolinate from L-aspartate: step 4/4. Catalyzes the conversion of 4-hydroxy-tetrahydrodipicolinate (HTPA) to tetrahydrodipicolinate. The polypeptide is 4-hydroxy-tetrahydrodipicolinate reductase (Methanopyrus kandleri (strain AV19 / DSM 6324 / JCM 9639 / NBRC 100938)).